The chain runs to 204 residues: Transcriptional regulator GfcR (204 aa).

It belongs to the purine/pyrimidine phosphoribosyltransferase family. GfcR subfamily.

This is Transcriptional regulator GfcR from Methanoculleus marisnigri (strain ATCC 35101 / DSM 1498 / JR1).